The primary structure comprises 907 residues: MTINKLESRNDKEAIAEEITILTKLLDDATKTMVGSASFDKITLFKKLSIEEKHQELEREIEQLTNEEMVVVSRYFSILPLLINISEDVNLAYEINYQNNNDIDYLGKLSATIELVSSQKNAQEILENVNVVPVLTAHPTQVQRKTMLDLTNHIHELLRKYRDVKAGSINKQKWYDDMRRYVELIMQTDIIREKKLKVTNEITNVMEYYNSSLIKGVTKLITEYKHLSHQKGFDLGNAKPITMGMWIGGDRDGNPFVTAETLKISALVQNEVILNYYIDKVSDLYRTFSLSTSLSTISNAVKEMADRSTDVSIYREKEPYRKAFHYIQSRLQETLIYLKNNHLEELESEDSAQILPYQSAQEFRNDLQLIKDSLLENNGSAFITGDLTELLQAVDVFGFFLASIDMRQDSSVHETCVAELLASANIVANYSDLPEEEKIAILLKELTEDPRILSATHVEKSEILQKELAIFKTARKLKDALGEDVIKQHIISHTESISDMFELAIMLKEVGLVDTDKARVQIVPLFETIEDLDNSREIMRQYLNYDIVKKWIAANHNYQEIMLGYSDSNKDGGYLSSGWALYKAQNELTEIGYDNGVKITFFHGRGGTVGRGGGPSYEAITSQPFGSIKDRIRLTEQGEVIGNKYGNKDVAYYNLEMLVSATLDRMVTRRIVNSDNLVNYRLIMDEIVADSNLIYRDLVFGNEHFYDYFFAASPIREVSSLNIGSRPAARKTITEISGLRAIPWVFSWSQNRIMFPGWYGVGSAFKHFIDKDEKNLTKLQEMYQSWPFFHSLLSNVDMVLSKSNMNIAFEYAKLCQDEETKEVFATILDEWQLTKNVILAIESHKQLLEDNSYLKASLDYRLPYFNVLNYIQIELIKRQRRGELGENLENLIHITINGVATGLRNSG.

Catalysis depends on residues His-138 and Lys-570.

This sequence belongs to the PEPCase type 1 family. The cofactor is Mg(2+).

It catalyses the reaction oxaloacetate + phosphate = phosphoenolpyruvate + hydrogencarbonate. Forms oxaloacetate, a four-carbon dicarboxylic acid source for the tricarboxylic acid cycle. The sequence is that of Phosphoenolpyruvate carboxylase from Streptococcus mutans serotype c (strain ATCC 700610 / UA159).